We begin with the raw amino-acid sequence, 1192 residues long: Coiled-coil domain-containing protein 40 (1192 aa).

5 disordered regions span residues 1–78, 126–153, 173–196, 211–246, and 261–289; these read MMDA…PGMD, KAKHRKVRPQAEVESTGRAAPEGELEVS, SSPEVSYSDISPLEMGEDDTNVSA, EPIEPTEPPEPAEPPKPAETPEDSTVRAPAHPYQRD, and GSLTPSDTDDLPLETDEPPQQESVQSTPR. Residues 27-45 show a composition bias toward acidic residues; the sequence is PETEVEFIGETAPDTDVEF. Positions 215–228 are enriched in pro residues; it reads PTEPPEPAEPPKPA. The span at 267–279 shows a compositional bias: acidic residues; that stretch reads DTDDLPLETDEPP. At S306 the chain carries Phosphoserine. Coiled-coil stretches lie at residues 308–369, 425–451, 581–649, 733–768, 830–871, 919–972, and 1044–1118; these read EALL…ATKQ, KTCQTANEERKKLAALQTEVESLALHL, DSEI…MLNK, NTNCKIDMHKKTLAEMDKEVKRFNDLITNSESEIAR, LQQE…KIAH, LRTL…EMRS, and QQRE…IVTL.

It belongs to the CCDC40 family. Specifically expressed in the embryonic node and midline.

It localises to the cytoplasm. Its subcellular location is the cell projection. It is found in the cilium. Its function is as follows. Required for assembly of dynein regulatory complex (DRC) and inner dynein arm (IDA) complexes, which are responsible for ciliary beat regulation, thereby playing a central role in motility in cilia and flagella. Probably acts together with CCDC39 to form a molecular ruler that determines the 96 nanometer (nm) repeat length and arrangements of components in cilia and flagella. Not required for outer dynein arm complexes assembly. Required for axonemal recruitment of CCDC39. The chain is Coiled-coil domain-containing protein 40 from Mus musculus (Mouse).